We begin with the raw amino-acid sequence, 269 residues long: Monofunctional glycosyltransferase (269 aa).

The helical transmembrane segment at 46–66 (ILLTILIIIALFIGIMYFLST) threads the bilayer.

It belongs to the glycosyltransferase 51 family.

The protein resides in the cell membrane. The enzyme catalyses [GlcNAc-(1-&gt;4)-Mur2Ac(oyl-L-Ala-gamma-D-Glu-L-Lys-D-Ala-D-Ala)](n)-di-trans,octa-cis-undecaprenyl diphosphate + beta-D-GlcNAc-(1-&gt;4)-Mur2Ac(oyl-L-Ala-gamma-D-Glu-L-Lys-D-Ala-D-Ala)-di-trans,octa-cis-undecaprenyl diphosphate = [GlcNAc-(1-&gt;4)-Mur2Ac(oyl-L-Ala-gamma-D-Glu-L-Lys-D-Ala-D-Ala)](n+1)-di-trans,octa-cis-undecaprenyl diphosphate + di-trans,octa-cis-undecaprenyl diphosphate + H(+). The protein operates within cell wall biogenesis; peptidoglycan biosynthesis. In terms of biological role, peptidoglycan polymerase that catalyzes glycan chain elongation using lipid-linked disaccharide-pentapeptide as the substrate. This chain is Monofunctional glycosyltransferase, found in Staphylococcus aureus (strain Newman).